Consider the following 200-residue polypeptide: Probable nicotinate-nucleotide adenylyltransferase (200 aa).

This sequence belongs to the NadD family.

The enzyme catalyses nicotinate beta-D-ribonucleotide + ATP + H(+) = deamido-NAD(+) + diphosphate. It functions in the pathway cofactor biosynthesis; NAD(+) biosynthesis; deamido-NAD(+) from nicotinate D-ribonucleotide: step 1/1. Functionally, catalyzes the reversible adenylation of nicotinate mononucleotide (NaMN) to nicotinic acid adenine dinucleotide (NaAD). In Clostridium tetani (strain Massachusetts / E88), this protein is Probable nicotinate-nucleotide adenylyltransferase.